A 3420-amino-acid polypeptide reads, in one-letter code: Adhesin BmaC autotransporter (3420 aa).

An N-terminal signal peptide occupies residues 1 to 72; that stretch reads MPNLANQDFT…SLVMAGTAAA (72 aa). The Autotransporter domain occupies 3138-3420; it reads GPSGNNGIWA…AGSVGLRVRW (283 aa).

It is found in the cell surface. It localises to the cell outer membrane. In terms of biological role, fibronectin-binding protein, which is involved in adhesion to host cells and in the infective process. Mediates the binding of B.suis to the extracellular matrix and to non-phagocytic cells via cell-associated fibronectin. The sequence is that of Adhesin BmaC autotransporter from Brucella suis biovar 1 (strain 1330).